The sequence spans 285 residues: Bifunctional protein FolD (285 aa).

NADP(+)-binding positions include 165–167 and serine 190; that span reads GRS.

It belongs to the tetrahydrofolate dehydrogenase/cyclohydrolase family. Homodimer.

It catalyses the reaction (6R)-5,10-methylene-5,6,7,8-tetrahydrofolate + NADP(+) = (6R)-5,10-methenyltetrahydrofolate + NADPH. The catalysed reaction is (6R)-5,10-methenyltetrahydrofolate + H2O = (6R)-10-formyltetrahydrofolate + H(+). The protein operates within one-carbon metabolism; tetrahydrofolate interconversion. In terms of biological role, catalyzes the oxidation of 5,10-methylenetetrahydrofolate to 5,10-methenyltetrahydrofolate and then the hydrolysis of 5,10-methenyltetrahydrofolate to 10-formyltetrahydrofolate. The sequence is that of Bifunctional protein FolD from Burkholderia cenocepacia (strain HI2424).